The chain runs to 399 residues: Argininosuccinate synthase (399 aa).

9 to 17 is an ATP binding site; it reads AYSGGLDTS. Tyrosine 85 contacts L-citrulline. Residue glycine 115 participates in ATP binding. L-aspartate-binding residues include threonine 117, asparagine 121, and aspartate 122. Asparagine 121 contributes to the L-citrulline binding site. Positions 125, 173, 258, and 270 each coordinate L-citrulline.

This sequence belongs to the argininosuccinate synthase family. Type 1 subfamily. In terms of assembly, homotetramer.

It is found in the cytoplasm. It carries out the reaction L-citrulline + L-aspartate + ATP = 2-(N(omega)-L-arginino)succinate + AMP + diphosphate + H(+). It participates in amino-acid biosynthesis; L-arginine biosynthesis; L-arginine from L-ornithine and carbamoyl phosphate: step 2/3. The chain is Argininosuccinate synthase from Streptococcus thermophilus (strain CNRZ 1066).